The sequence spans 287 residues: Probable endonuclease 4 (287 aa).

The Zn(2+) site is built by H69, H109, E144, D178, H181, H215, D228, H230, and E260.

It belongs to the AP endonuclease 2 family. Zn(2+) serves as cofactor.

It catalyses the reaction Endonucleolytic cleavage to 5'-phosphooligonucleotide end-products.. Its function is as follows. Endonuclease IV plays a role in DNA repair. It cleaves phosphodiester bonds at apurinic or apyrimidinic (AP) sites, generating a 3'-hydroxyl group and a 5'-terminal sugar phosphate. The chain is Probable endonuclease 4 from Thermotoga sp. (strain RQ2).